Reading from the N-terminus, the 61-residue chain is Sperm protamine P1 (61 aa).

Positions 1-61 are disordered; sequence MARYRHSRSR…RYSRRRRRRY (61 aa).

Belongs to the protamine P1 family. As to expression, testis.

Its subcellular location is the nucleus. The protein localises to the chromosome. In terms of biological role, protamines substitute for histones in the chromatin of sperm during the haploid phase of spermatogenesis. They compact sperm DNA into a highly condensed, stable and inactive complex. This chain is Sperm protamine P1 (PRM1), found in Setonix brachyurus (Quokka).